Here is a 1004-residue protein sequence, read N- to C-terminus: 2-oxoglutarate dehydrogenase E1 component (1004 aa).

It belongs to the alpha-ketoglutarate dehydrogenase family. Homodimer. Part of the 2-oxoglutarate dehydrogenase (OGDH) complex composed of E1 (2-oxoglutarate dehydrogenase), E2 (dihydrolipoamide succinyltransferase) and E3 (dihydrolipoamide dehydrogenase); the complex contains multiple copies of the three enzymatic components (E1, E2 and E3). The cofactor is thiamine diphosphate.

The enzyme catalyses N(6)-[(R)-lipoyl]-L-lysyl-[protein] + 2-oxoglutarate + H(+) = N(6)-[(R)-S(8)-succinyldihydrolipoyl]-L-lysyl-[protein] + CO2. In terms of biological role, E1 component of the 2-oxoglutarate dehydrogenase (OGDH) complex which catalyzes the decarboxylation of 2-oxoglutarate, the first step in the conversion of 2-oxoglutarate to succinyl-CoA and CO(2). This Brucella canis (strain ATCC 23365 / NCTC 10854 / RM-666) protein is 2-oxoglutarate dehydrogenase E1 component.